A 61-amino-acid polypeptide reads, in one-letter code: [Val1,Thr6]-bradykinyl-Val,Asp (61 aa).

A signal peptide spans 1 to 22 (MAFLKKSLFLVLFLGVVSLSFC). A propeptide spanning residues 23-48 (EEEEREEHEEEKREAEAAESAENLIS) is cleaved from the precursor. The interval 27–61 (REEHEEEKREAEAAESAENLISKRVPPGFTPFRVD) is disordered.

Expressed by the skin glands. Expression levels in inguinal glands and granular glands are virtually the same.

It is found in the secreted. Induces contraction of rat ileum smooth muscle (EC(50)=2.73 uM) but has no activity towards rat smooth muscle from tail artery, urinary bladder or uterus. Binds to both bradykinin receptor B1 (BDKRB1) and B2 (BDKRB2); the effect via BDKRB1 is stronger. The protein is [Val1,Thr6]-bradykinyl-Val,Asp of Physalaemus nattereri (Cuyaba dwarf frog).